Here is a 373-residue protein sequence, read N- to C-terminus: Chloroperoxidase (373 aa).

A signal peptide spans 1-20 (MFSKVLPFVGAVAALPHSVR). Residue glutamine 21 is modified to Pyrrolidone carboxylic acid. A glycan (N-linked (GlcNAc...) asparagine) is linked at asparagine 33. Position 50 (cysteine 50) interacts with heme. A disulfide bond links cysteine 100 and cysteine 108. N-linked (GlcNAc...) asparagine glycosylation is present at asparagine 114. Mn(2+) contacts are provided by glutamate 125, histidine 126, and serine 129. Glutamate 204 is a catalytic residue. An N-linked (GlcNAc...) asparagine glycan is attached at asparagine 237. An O-linked (Man) threonine glycan is attached at threonine 259. O-linked (Man) serine glycosylation is found at serine 260, serine 262, serine 263, and serine 269. A glycan (O-linked (Man) threonine) is linked at threonine 271. Serine 272 is a glycosylation site (O-linked (Man) serine). Residue threonine 273 is glycosylated (O-linked (Man) threonine). 3 O-linked (Man...) threonine glycosylation sites follow: threonine 296, threonine 304, and threonine 314. The propeptide occupies 322-373 (EAAPAATTSMAVFKNPYLEAIGTQDIKNQQAYVSSKAAAMASAMAANKARNL).

It belongs to the chloroperoxidase family. Heme b is required as a cofactor. Requires Mn(2+) as cofactor. In terms of processing, N- and O-glycosylated.

The catalysed reaction is RH + Cl(-) + H2O2 = RCl + 2 H2O.. Catalyzes peroxidative halogenations involved in the biosynthesis of clardariomycin (2,2-dichloro-1,3-cyclo-pentenedione). The enzyme also has potent catalase activity and in the absence of halide ion, acts as a peroxidase similar to plant peroxidases. The sequence is that of Chloroperoxidase (CPO) from Leptoxyphium fumago (Caldariomyces fumago).